The following is a 96-amino-acid chain: Aspartyl/glutamyl-tRNA(Asn/Gln) amidotransferase subunit C (96 aa).

It belongs to the GatC family. Heterotrimer of A, B and C subunits.

It carries out the reaction L-glutamyl-tRNA(Gln) + L-glutamine + ATP + H2O = L-glutaminyl-tRNA(Gln) + L-glutamate + ADP + phosphate + H(+). The enzyme catalyses L-aspartyl-tRNA(Asn) + L-glutamine + ATP + H2O = L-asparaginyl-tRNA(Asn) + L-glutamate + ADP + phosphate + 2 H(+). Its function is as follows. Allows the formation of correctly charged Asn-tRNA(Asn) or Gln-tRNA(Gln) through the transamidation of misacylated Asp-tRNA(Asn) or Glu-tRNA(Gln) in organisms which lack either or both of asparaginyl-tRNA or glutaminyl-tRNA synthetases. The reaction takes place in the presence of glutamine and ATP through an activated phospho-Asp-tRNA(Asn) or phospho-Glu-tRNA(Gln). This chain is Aspartyl/glutamyl-tRNA(Asn/Gln) amidotransferase subunit C, found in Chloroflexus aurantiacus (strain ATCC 29366 / DSM 635 / J-10-fl).